Here is a 187-residue protein sequence, read N- to C-terminus: RNA 2',3'-cyclic phosphodiesterase (187 aa).

Histidine 40 (proton donor) is an active-site residue. 2 short sequence motifs (HXTX) span residues 40–43 and 125–128; these read HLTL and HITI. Histidine 125 (proton acceptor) is an active-site residue.

It belongs to the 2H phosphoesterase superfamily. ThpR family.

It carries out the reaction a 3'-end 2',3'-cyclophospho-ribonucleotide-RNA + H2O = a 3'-end 2'-phospho-ribonucleotide-RNA + H(+). Its function is as follows. Hydrolyzes RNA 2',3'-cyclic phosphodiester to an RNA 2'-phosphomonoester. In Thermotoga maritima (strain ATCC 43589 / DSM 3109 / JCM 10099 / NBRC 100826 / MSB8), this protein is RNA 2',3'-cyclic phosphodiesterase.